We begin with the raw amino-acid sequence, 425 residues long: MTKALEGVRILDFTHVQSGPTCTQLLAWFGADVIKVERPGVGDITRGQLQDIPNVDSLYFTMLNHNKRSITLDTKNPKGKEVLTELIKKCDVLVENFGPGVLDRMGFPWEKIQAINPKMIVASIKGFGPGPYEDCKVYENVAQCTGGAASTTGFRDGLPLVTGAQIGDSGTGLHLALGIVTALYQRTHTGRGQRVTAAMQDGVLNLCRVKLRDQQRLDHGPLKEYSQFGEGVPFGDAVPRAGNDSGGGQPGRILKCKGWETDPNAYIYFITQAPVWEKICDVIGEPTWKTDPNYAKPAARLPRLNEIFGRIEQWTMTKTKFEAMDILNEFDIPCGPILSMKEIAEDESLRKTGTLVEVDHPTRGKYLSVGNPIKLSDSPADVTRSPLLGEHTDEILRQVLGFSDHQVAEIHDSGALDPPRKEAAE.

CoA is bound by residues 17–18 (QS), arginine 38, 72–75 (LDTK), 96–98 (NFG), arginine 104, and 136–139 (KVYE). Aspartate 168 acts as the Nucleophile in catalysis. 247 to 249 (GGQ) contacts substrate.

It belongs to the CoA-transferase III family. Frc subfamily. In terms of assembly, homodimer.

The catalysed reaction is formyl-CoA + oxalate = oxalyl-CoA + formate. Its pathway is metabolic intermediate degradation; oxalate degradation; CO(2) and formate from oxalate: step 1/2. Involved in the catabolism of oxalate and in the adapatation to low pH via the induction of the oxalate-dependent acid tolerance response (ATR). Catalyzes the transfer of the CoA moiety from formyl-CoA to oxalate. This is Formyl-CoA:oxalate CoA-transferase from Bradyrhizobium sp. (strain ORS 278).